The primary structure comprises 183 residues: uncharacterized protein (183 aa).

The protein to M.leprae ML2442.

This is an uncharacterized protein from Mycobacterium tuberculosis (strain CDC 1551 / Oshkosh).